Reading from the N-terminus, the 163-residue chain is Shikimate kinase (163 aa).

10–15 (GVGKSS) lines the ATP pocket. Ser14 lines the Mg(2+) pocket. Substrate-binding residues include Asp28, Arg52, and Gly75. Arg116 is an ATP binding site. Position 134 (Arg134) interacts with substrate. Arg151 contributes to the ATP binding site.

It belongs to the shikimate kinase family. As to quaternary structure, monomer. The cofactor is Mg(2+).

The protein localises to the cytoplasm. The enzyme catalyses shikimate + ATP = 3-phosphoshikimate + ADP + H(+). The protein operates within metabolic intermediate biosynthesis; chorismate biosynthesis; chorismate from D-erythrose 4-phosphate and phosphoenolpyruvate: step 5/7. Functionally, catalyzes the specific phosphorylation of the 3-hydroxyl group of shikimic acid using ATP as a cosubstrate. The chain is Shikimate kinase from Streptococcus thermophilus (strain ATCC BAA-491 / LMD-9).